The chain runs to 206 residues: Large ribosomal subunit protein uL4 (206 aa).

Residues 63 to 96 (MYKQKGTGRARHHSARAPQFRGGGKAHGPVVRSH) are disordered. Residues 64–77 (YKQKGTGRARHHSA) are compositionally biased toward basic residues.

It belongs to the universal ribosomal protein uL4 family. As to quaternary structure, part of the 50S ribosomal subunit.

In terms of biological role, one of the primary rRNA binding proteins, this protein initially binds near the 5'-end of the 23S rRNA. It is important during the early stages of 50S assembly. It makes multiple contacts with different domains of the 23S rRNA in the assembled 50S subunit and ribosome. Its function is as follows. Forms part of the polypeptide exit tunnel. The protein is Large ribosomal subunit protein uL4 of Allorhizobium ampelinum (strain ATCC BAA-846 / DSM 112012 / S4) (Agrobacterium vitis (strain S4)).